The chain runs to 514 residues: Peptide chain release factor 3 (514 aa).

Residues 8–268 (KKRRTFAIIS…TFLKFAPEPH (261 aa)) form the tr-type G domain. GTP-binding positions include 17 to 24 (SHPDAGKT), 85 to 89 (DTPGH), and 139 to 142 (NKLD).

This sequence belongs to the TRAFAC class translation factor GTPase superfamily. Classic translation factor GTPase family. PrfC subfamily.

Its subcellular location is the cytoplasm. Functionally, increases the formation of ribosomal termination complexes and stimulates activities of RF-1 and RF-2. It binds guanine nucleotides and has strong preference for UGA stop codons. It may interact directly with the ribosome. The stimulation of RF-1 and RF-2 is significantly reduced by GTP and GDP, but not by GMP. The chain is Peptide chain release factor 3 from Streptococcus sanguinis (strain SK36).